Reading from the N-terminus, the 359-residue chain is Homoserine O-acetyltransferase (359 aa).

An AB hydrolase-1 domain is found at 49–332 (VLICHALTGS…QSSYGHDAFL (284 aa)). The Nucleophile role is filled by Ser143. Substrate is bound at residue Arg212. Catalysis depends on residues Asp299 and His328. Asp329 contacts substrate.

The protein belongs to the AB hydrolase superfamily. MetX family. Homodimer.

The protein resides in the cytoplasm. It catalyses the reaction L-homoserine + acetyl-CoA = O-acetyl-L-homoserine + CoA. It functions in the pathway amino-acid biosynthesis; L-methionine biosynthesis via de novo pathway; O-acetyl-L-homoserine from L-homoserine: step 1/1. Transfers an acetyl group from acetyl-CoA to L-homoserine, forming acetyl-L-homoserine. This chain is Homoserine O-acetyltransferase, found in Trichormus variabilis (strain ATCC 29413 / PCC 7937) (Anabaena variabilis).